We begin with the raw amino-acid sequence, 123 residues long: MPTIQQLIRNARQPIRSRTKSPALRGCPQRRGVCIRVYTTTPKKPNSALRKVARVRLTSGFEITAYIPGIGHNLQEHSVVSVRGGRVKDLPGVRYHIVRGTLDAVGVKDRKQGRSRYGVKKPK.

Belongs to the universal ribosomal protein uS12 family. As to quaternary structure, part of the 30S ribosomal subunit.

Its subcellular location is the plastid. It is found in the chloroplast. In terms of biological role, with S4 and S5 plays an important role in translational accuracy. Located at the interface of the 30S and 50S subunits. The polypeptide is Small ribosomal subunit protein uS12cz/uS12cy (rps12-A) (Psilotum nudum (Whisk fern)).